The sequence spans 315 residues: Bifunctional protein FolD (315 aa).

Residues 166-168 (GRS), serine 193, and isoleucine 234 contribute to the NADP(+) site.

Belongs to the tetrahydrofolate dehydrogenase/cyclohydrolase family. In terms of assembly, homodimer.

The catalysed reaction is (6R)-5,10-methylene-5,6,7,8-tetrahydrofolate + NADP(+) = (6R)-5,10-methenyltetrahydrofolate + NADPH. The enzyme catalyses (6R)-5,10-methenyltetrahydrofolate + H2O = (6R)-10-formyltetrahydrofolate + H(+). It participates in one-carbon metabolism; tetrahydrofolate interconversion. Its function is as follows. Catalyzes the oxidation of 5,10-methylenetetrahydrofolate to 5,10-methenyltetrahydrofolate and then the hydrolysis of 5,10-methenyltetrahydrofolate to 10-formyltetrahydrofolate. This is Bifunctional protein FolD from Treponema pallidum (strain Nichols).